A 229-amino-acid chain; its full sequence is Ribonuclease 3 (229 aa).

The 130-residue stretch at Trp-4–Gly-133 folds into the RNase III domain. Glu-46 provides a ligand contact to Mg(2+). The active site involves Asp-50. The Mg(2+) site is built by Asp-119 and Glu-122. Glu-122 is an active-site residue. Residues Asp-159–His-228 form the DRBM domain.

The protein belongs to the ribonuclease III family. As to quaternary structure, homodimer. It depends on Mg(2+) as a cofactor.

It localises to the cytoplasm. The catalysed reaction is Endonucleolytic cleavage to 5'-phosphomonoester.. In terms of biological role, digests double-stranded RNA. Involved in the processing of primary rRNA transcript to yield the immediate precursors to the large and small rRNAs (23S and 16S). Processes some mRNAs, and tRNAs when they are encoded in the rRNA operon. Processes pre-crRNA and tracrRNA of type II CRISPR loci if present in the organism. This Listeria innocua serovar 6a (strain ATCC BAA-680 / CLIP 11262) protein is Ribonuclease 3.